The sequence spans 1007 residues: Bifunctional glutamine synthetase adenylyltransferase/adenylyl-removing enzyme (1007 aa).

The segment at 1-496 (MTREQLSLTV…LHERLFYRPL (496 aa)) is adenylyl removase. Residues 505–1007 (NEDARLSGEA…GPPQRPATTA (503 aa)) form an adenylyl transferase region.

This sequence belongs to the GlnE family. Mg(2+) serves as cofactor.

The enzyme catalyses [glutamine synthetase]-O(4)-(5'-adenylyl)-L-tyrosine + phosphate = [glutamine synthetase]-L-tyrosine + ADP. The catalysed reaction is [glutamine synthetase]-L-tyrosine + ATP = [glutamine synthetase]-O(4)-(5'-adenylyl)-L-tyrosine + diphosphate. Functionally, involved in the regulation of glutamine synthetase GlnA, a key enzyme in the process to assimilate ammonia. When cellular nitrogen levels are high, the C-terminal adenylyl transferase (AT) inactivates GlnA by covalent transfer of an adenylyl group from ATP to specific tyrosine residue of GlnA, thus reducing its activity. Conversely, when nitrogen levels are low, the N-terminal adenylyl removase (AR) activates GlnA by removing the adenylyl group by phosphorolysis, increasing its activity. The regulatory region of GlnE binds the signal transduction protein PII (GlnB) which indicates the nitrogen status of the cell. This is Bifunctional glutamine synthetase adenylyltransferase/adenylyl-removing enzyme from Leifsonia xyli subsp. xyli (strain CTCB07).